The chain runs to 1037 residues: Presequence protease, mitochondrial (1037 aa).

A mitochondrion-targeting transit peptide spans 1-15 (MWRCGGRQGLGVLRR). His104 provides a ligand contact to Zn(2+). Glu107 (proton acceptor) is an active-site residue. 2 residues coordinate Zn(2+): His108 and Glu205. A disulfide bridge connects residues Cys119 and Cys556. Lys759 carries the post-translational modification N6-acetyllysine. The residue at position 770 (Lys770) is an N6-acetyllysine; alternate. Lys770 is subject to N6-succinyllysine; alternate. The disordered stretch occupies residues 803–834 (IGRSKKERRPVRPHTVEKPVPSSSGGDAHVPH). A compositionally biased stretch (basic residues) spans 804-814 (GRSKKERRPVR). The residue at position 849 (Lys849) is an N6-succinyllysine. Lys884 is subject to N6-acetyllysine. Lys946 bears the N6-succinyllysine mark.

It belongs to the peptidase M16 family. PreP subfamily. As to quaternary structure, monomer and homodimer; homodimerization is induced by binding of the substrate. It depends on Zn(2+) as a cofactor. In terms of processing, a disulfide bond locks the enzyme in the closed conformation preventing substrate entry into the catalytic chamber.

The protein localises to the mitochondrion matrix. With respect to regulation, mainly exists in a closed and catalytically competent conformation but a closed-to-open switch allows substrate entry into the catalytic chamber. Substrate binding induces closure and dimerization. A disulfide bond may lock the enzyme in a closed conformation preventing substrate entry into the catalytic chamber, participating in redox regulation of the enzyme. Inhibited by metal-chelating agents. Inhibited by nickel and zinc excess, and slightly activated by manganese. In terms of biological role, metalloendopeptidase of the mitochondrial matrix that functions in peptide cleavage and degradation rather than in protein processing. Has an ATP-independent activity. Specifically cleaves peptides in the range of 5 to 65 residues. Shows a preference for cleavage after small polar residues and before basic residues, but without any positional preference. Degrades the transit peptides of mitochondrial proteins after their cleavage. Also degrades other unstructured peptides. It is also able to degrade amyloid-beta protein 40, one of the peptides produced by APP processing, when it accumulates in mitochondrion. It is a highly efficient protease, at least toward amyloid-beta protein 40. Cleaves that peptide at a specific position and is probably not processive, releasing digested peptides intermediates that can be further cleaved subsequently. It is also able to degrade amyloid-beta protein 42. This is Presequence protease, mitochondrial from Pongo abelii (Sumatran orangutan).